Consider the following 219-residue polypeptide: Ribose-5-phosphate isomerase A (219 aa).

Residues 28–31 (SGST), 81–84 (DGAD), and 94–97 (KGGG) contribute to the substrate site. The Proton acceptor role is filled by Glu103. Lys121 lines the substrate pocket.

The protein belongs to the ribose 5-phosphate isomerase family. In terms of assembly, homodimer.

It carries out the reaction aldehydo-D-ribose 5-phosphate = D-ribulose 5-phosphate. Its pathway is carbohydrate degradation; pentose phosphate pathway; D-ribose 5-phosphate from D-ribulose 5-phosphate (non-oxidative stage): step 1/1. Functionally, catalyzes the reversible conversion of ribose-5-phosphate to ribulose 5-phosphate. This chain is Ribose-5-phosphate isomerase A, found in Haemophilus ducreyi (strain 35000HP / ATCC 700724).